A 267-amino-acid polypeptide reads, in one-letter code: Putative ankyrin repeat protein RF_1099 (267 aa).

ANK repeat units follow at residues 46–75 (DPITPIADAIKADNLEEVKKILDEGYGVNQ), 78–107 (LGWVPLDYAISNNNIKIADFLLKRDASMSL), 136–165 (DGITGMMLAAERNNPDLIKLLLKLGVNPNV), and 170–199 (TGMTSLMYAASYLNVEVVRVLLEQGVDPNI). A coiled-coil region spans residues 238–265 (KQKIIKERNSIKTRNKEKEKEIKKLFNS).

The chain is Putative ankyrin repeat protein RF_1099 from Rickettsia felis (strain ATCC VR-1525 / URRWXCal2) (Rickettsia azadi).